The chain runs to 233 residues: Achaete-scute homolog 1 (233 aa).

Disordered stretches follow at residues 1-24 (MESS…FLPP) and 39-95 (AAAA…ELMR). Residues 39 to 62 (AAAAAAQSAQQQQQQQAPQQQAPQ) are compositionally biased toward low complexity. The span at 78-87 (SAAKQVKRQR) shows a compositional bias: basic residues. The region spanning 115 to 167 (AAVARRNERERNRVKLVNLGFATLREHVPNGAANKKMSKVETLRSAVEYIRAL) is the bHLH domain. Lys-153 bears the N6-acetyllysine mark.

In terms of assembly, efficient DNA binding requires dimerization with another bHLH protein. Forms a heterodimer with TCF3. As to expression, developing CNS and PNS at embryonic and postnatal stages.

It is found in the nucleus. Its function is as follows. Transcription factor that plays a key role in neuronal differentiation: acts as a pioneer transcription factor, accessing closed chromatin to allow other factors to bind and activate neural pathways. Directly binds the E box motif (5'-CANNTG-3') on promoters and promotes transcription of neuronal genes. The combination of three transcription factors, ASCL1, POU3F2/BRN2 and MYT1L, is sufficient to reprogram fibroblasts and other somatic cells into induced neuronal (iN) cells in vitro. Plays a role at early stages of development of specific neural lineages in most regions of the CNS, and of several lineages in the PNS. Essential for the generation of olfactory and autonomic neurons. Acts synergistically with FOXN4 to specify the identity of V2b neurons rather than V2a from bipotential p2 progenitors during spinal cord neurogenesis, probably through DLL4-NOTCH signaling activation. Involved in the regulation of neuroendocrine cell development in the glandular stomach. This chain is Achaete-scute homolog 1 (Ascl1), found in Rattus norvegicus (Rat).